We begin with the raw amino-acid sequence, 406 residues long: Argininosuccinate synthase (406 aa).

ATP contacts are provided by residues 12–20 and alanine 39; that span reads AYSGGLDTS. 2 residues coordinate L-citrulline: tyrosine 90 and serine 95. Glycine 120 contributes to the ATP binding site. Residues threonine 122, asparagine 126, and aspartate 127 each coordinate L-aspartate. Asparagine 126 is an L-citrulline binding site. Arginine 130, serine 179, serine 188, glutamate 264, and tyrosine 276 together coordinate L-citrulline.

The protein belongs to the argininosuccinate synthase family. Type 1 subfamily. In terms of assembly, homotetramer.

The protein resides in the cytoplasm. It carries out the reaction L-citrulline + L-aspartate + ATP = 2-(N(omega)-L-arginino)succinate + AMP + diphosphate + H(+). Its pathway is amino-acid biosynthesis; L-arginine biosynthesis; L-arginine from L-ornithine and carbamoyl phosphate: step 2/3. In Citrifermentans bemidjiense (strain ATCC BAA-1014 / DSM 16622 / JCM 12645 / Bem) (Geobacter bemidjiensis), this protein is Argininosuccinate synthase.